Reading from the N-terminus, the 216-residue chain is Small ribosomal subunit protein uS3c (216 aa).

The 76-residue stretch at 43 to 118 (IKNYLQKNMR…KLNIAITRIT (76 aa)) folds into the KH type-2 domain.

It belongs to the universal ribosomal protein uS3 family. Part of the 30S ribosomal subunit.

The protein localises to the plastid. Its subcellular location is the chloroplast. This is Small ribosomal subunit protein uS3c (rps3) from Eucalyptus globulus subsp. globulus (Tasmanian blue gum).